The sequence spans 89 residues: Snake venom serine protease rhinocerase (89 aa).

The Peptidase S1 domain occupies 1 to 89 (VIGGAECDIN…KVFDYIPWIK (89 aa)). Asp45 functions as the Charge relay system in the catalytic mechanism. An intrachain disulfide couples Cys64 to Cys69.

Belongs to the peptidase S1 family. Snake venom subfamily. In terms of processing, glycosylated. In terms of tissue distribution, expressed by the venom gland.

The protein resides in the secreted. Its activity is regulated as follows. Inhibited by PMSF. Not inhibited by benzamidine. Its function is as follows. Snake venom serine protease that cleaves fibrinogen alpha and beta chains (FGA and FGB), but not gamma chains. Exhibits fibrinolytic and kininogenolytic. Preferentially cleaves after Arg and Lys residues. The sequence is that of Snake venom serine protease rhinocerase from Bitis rhinoceros (West African gaboon viper).